Consider the following 348-residue polypeptide: MIRISLDLMGGDFGPEVVIPGAAKALERHPDITFIMYGMKDRCEPILGKYAKLREKSVFHECDVSISMDEKPSQALRRGRYVSSMWRSIEAVKLGEADVVVSAGNTGALMAMAKFCLRTMANIERPAIAAIWPTLRGESIVLDVGATIGADSQQLLDFALMGGAMARALFEIERPTIGLLNVGVEEIKGQEDVKEAGRLIREANLESLEYSGFVEGDDIGKGTVDVVVTEGFSGNIALKAAEGTAKQIGAYLRSAMTRTLLARIGYLFAKGAFDLLREKLDPSKVNGGVFLGLNGIVIKSHGGASAEAFAAAIDVGYDMAKNGLTQKIENDLKRYHAKRQPPIGPEAA.

This sequence belongs to the PlsX family. In terms of assembly, homodimer. Probably interacts with PlsY.

The protein resides in the cytoplasm. The enzyme catalyses a fatty acyl-[ACP] + phosphate = an acyl phosphate + holo-[ACP]. It functions in the pathway lipid metabolism; phospholipid metabolism. In terms of biological role, catalyzes the reversible formation of acyl-phosphate (acyl-PO(4)) from acyl-[acyl-carrier-protein] (acyl-ACP). This enzyme utilizes acyl-ACP as fatty acyl donor, but not acyl-CoA. In Rhizobium rhizogenes (strain K84 / ATCC BAA-868) (Agrobacterium radiobacter), this protein is Phosphate acyltransferase.